A 183-amino-acid chain; its full sequence is Ribosome rescue factor SmrB (183 aa).

The 76-residue stretch at 98-173 (LDLHGLTQLQ…GDAALLVLIE (76 aa)) folds into the Smr domain.

This sequence belongs to the SmrB family. In terms of assembly, associates with collided ribosomes, but not with correctly translating polysomes.

Its function is as follows. Acts as a ribosome collision sensor. Detects stalled/collided disomes (pairs of ribosomes where the leading ribosome is stalled and a second ribosome has collided with it) and endonucleolytically cleaves mRNA at the 5' boundary of the stalled ribosome. Stalled/collided disomes form a new interface (primarily via the 30S subunits) that binds SmrB. Cleaved mRNA becomes available for tmRNA ligation, leading to ribosomal subunit dissociation and rescue of stalled ribosomes. In Escherichia coli (strain 55989 / EAEC), this protein is Ribosome rescue factor SmrB.